The primary structure comprises 163 residues: Phosphopantetheine adenylyltransferase (163 aa).

Ser-8 serves as a coordination point for substrate. ATP is bound by residues 8-9 and His-16; that span reads SF. Positions 40, 72, and 86 each coordinate substrate. Residues 87–89, Glu-97, and 122–128 each bind ATP; these read GLR and HSFLSSS.

It belongs to the bacterial CoaD family. As to quaternary structure, homohexamer. It depends on Mg(2+) as a cofactor.

Its subcellular location is the cytoplasm. It catalyses the reaction (R)-4'-phosphopantetheine + ATP + H(+) = 3'-dephospho-CoA + diphosphate. Its pathway is cofactor biosynthesis; coenzyme A biosynthesis; CoA from (R)-pantothenate: step 4/5. In terms of biological role, reversibly transfers an adenylyl group from ATP to 4'-phosphopantetheine, yielding dephospho-CoA (dPCoA) and pyrophosphate. This chain is Phosphopantetheine adenylyltransferase, found in Parasynechococcus marenigrum (strain WH8102).